The chain runs to 341 residues: Ketol-acid reductoisomerase (NADP(+)) (341 aa).

In terms of domain architecture, KARI N-terminal Rossmann spans 2–181 (VKVYYNGDAN…GSARAGVIET (180 aa)). NADP(+) contacts are provided by residues 25–28 (YGSQ), Arg-48, Ser-52, and 82–85 (DEHQ). His-107 is a catalytic residue. Gly-133 is an NADP(+) binding site. The KARI C-terminal knotted domain maps to 182–327 (TFKEETETDL…RELRKMMPFV (146 aa)). 4 residues coordinate Mg(2+): Asp-190, Glu-194, Glu-226, and Glu-230. Ser-251 is a binding site for substrate.

It belongs to the ketol-acid reductoisomerase family. Mg(2+) is required as a cofactor.

The enzyme catalyses (2R)-2,3-dihydroxy-3-methylbutanoate + NADP(+) = (2S)-2-acetolactate + NADPH + H(+). It catalyses the reaction (2R,3R)-2,3-dihydroxy-3-methylpentanoate + NADP(+) = (S)-2-ethyl-2-hydroxy-3-oxobutanoate + NADPH + H(+). Its pathway is amino-acid biosynthesis; L-isoleucine biosynthesis; L-isoleucine from 2-oxobutanoate: step 2/4. It functions in the pathway amino-acid biosynthesis; L-valine biosynthesis; L-valine from pyruvate: step 2/4. Involved in the biosynthesis of branched-chain amino acids (BCAA). Catalyzes an alkyl-migration followed by a ketol-acid reduction of (S)-2-acetolactate (S2AL) to yield (R)-2,3-dihydroxy-isovalerate. In the isomerase reaction, S2AL is rearranged via a Mg-dependent methyl migration to produce 3-hydroxy-3-methyl-2-ketobutyrate (HMKB). In the reductase reaction, this 2-ketoacid undergoes a metal-dependent reduction by NADPH to yield (R)-2,3-dihydroxy-isovalerate. The chain is Ketol-acid reductoisomerase (NADP(+)) from Anoxybacillus flavithermus (strain DSM 21510 / WK1).